We begin with the raw amino-acid sequence, 416 residues long: Actin-like protein 9 (416 aa).

A disordered region spans residues 1 to 40 (MDASRPKSSESQSSLEAPRPGPNPSPNVVNKPLQRDSPGM).

The protein belongs to the actin family. As to quaternary structure, interacts with ACTL7A. As to expression, testis-specific.

The protein resides in the cytoplasmic vesicle. It localises to the secretory vesicle. Its subcellular location is the acrosome. The protein localises to the cytoplasm. It is found in the cytoskeleton. The protein resides in the perinuclear theca. Functionally, testis-specic protein that plays an important role in fusion of proacrosomal vesicles and perinuclear theca formation. The protein is Actin-like protein 9 of Homo sapiens (Human).